Consider the following 315-residue polypeptide: Long form salivary protein D7L1 (315 aa).

A signal peptide spans 1–18; it reads MIIVAVLLSFLAHLLVQA. Disulfide bonds link C37-C73 and C69-C128. W55 serves as a coordination point for thromboxane A2. Residue W58 participates in leukotriene C4 binding. Position 70 (Y70) interacts with thromboxane A2. 2 residues coordinate leukotriene C4: G152 and K170. K170 contacts thromboxane A2. Intrachain disulfides connect C178–C211 and C252–C263.

It belongs to the PBP/GOBP family. In terms of tissue distribution, distal-lateral and median lobes of female salivary gland (at protein level). Not detected in male salivary gland (at protein level). Expressed in female salivary gland. Not detected in female carcass without salivary glands. Expressed in male salivary gland and other tissues.

It is found in the secreted. In terms of biological role, modulates blood feeding of female mosquitoes on vertebrate species by binding and sequestering different mediators involved in the host response. Binds leukotriene C4, leukotriene D4, leukotriene E4 and stable analogs of thromboxane A2, U-46619 and carbocyclic TXA2. Binds weakly prostaglandins: PGD2, PGE2 and PGF2alpha. Does not bind leukotriene B4, biogenic amines, ADP, platelet activating phospholipid derivative PAF and arachidonic acid. Inhibits agonist-induced smooth muscle contraction. Inhibits platelet aggregation induced by low concentrations of collagen in thromboxane A2-dependent manner. This chain is Long form salivary protein D7L1, found in Anopheles stephensi (Indo-Pakistan malaria mosquito).